Here is a 158-residue protein sequence, read N- to C-terminus: Transcription elongation factor GreA (158 aa).

Residues 48–75 (NSEYDSAKEDQAFVEGRIAQLEKMIRNA) are a coiled coil.

This sequence belongs to the GreA/GreB family.

Functionally, necessary for efficient RNA polymerase transcription elongation past template-encoded arresting sites. The arresting sites in DNA have the property of trapping a certain fraction of elongating RNA polymerases that pass through, resulting in locked ternary complexes. Cleavage of the nascent transcript by cleavage factors such as GreA or GreB allows the resumption of elongation from the new 3'terminus. GreA releases sequences of 2 to 3 nucleotides. The sequence is that of Transcription elongation factor GreA from Shouchella clausii (strain KSM-K16) (Alkalihalobacillus clausii).